Here is an 88-residue protein sequence, read N- to C-terminus: MEDTVKITAEELKGYIERIEKLEQEKRDVQDHIRDVYAKATDEGWDIKVMKQIIRLRKMDDDDREEQEILLDTYKRALGMSYEEELSE.

This sequence belongs to the UPF0335 family.

This chain is UPF0335 protein WRi_003770, found in Wolbachia sp. subsp. Drosophila simulans (strain wRi).